The following is a 278-amino-acid chain: Non-heme chloroperoxidase (278 aa).

One can recognise an AB hydrolase-1 domain in the interval 26 to 264; that stretch reads PVVLIHGFPL…GAPHGLLWTH (239 aa). Active-site residues include serine 99, aspartate 229, and histidine 258.

The protein belongs to the AB hydrolase superfamily. Bacterial non-heme haloperoxidase / perhydrolase family. Homodimer.

In Kitasatospora aureofaciens (Streptomyces aureofaciens), this protein is Non-heme chloroperoxidase (cpo).